We begin with the raw amino-acid sequence, 217 residues long: 3,4-dihydroxy-2-butanone 4-phosphate synthase (217 aa).

Residues 37–38 (RE), aspartate 42, 150–154 (RGGHT), and glutamate 174 contribute to the D-ribulose 5-phosphate site. Position 38 (glutamate 38) interacts with Mg(2+). Histidine 153 lines the Mg(2+) pocket.

Belongs to the DHBP synthase family. As to quaternary structure, homodimer. Mg(2+) is required as a cofactor. Requires Mn(2+) as cofactor.

It carries out the reaction D-ribulose 5-phosphate = (2S)-2-hydroxy-3-oxobutyl phosphate + formate + H(+). It participates in cofactor biosynthesis; riboflavin biosynthesis; 2-hydroxy-3-oxobutyl phosphate from D-ribulose 5-phosphate: step 1/1. Functionally, catalyzes the conversion of D-ribulose 5-phosphate to formate and 3,4-dihydroxy-2-butanone 4-phosphate. The protein is 3,4-dihydroxy-2-butanone 4-phosphate synthase of Salmonella heidelberg (strain SL476).